Reading from the N-terminus, the 492-residue chain is N-succinylglutamate 5-semialdehyde dehydrogenase (492 aa).

220–225 contacts NAD(+); it reads GRANTG. Active-site residues include Glu243 and Cys277.

This sequence belongs to the aldehyde dehydrogenase family. AstD subfamily.

It carries out the reaction N-succinyl-L-glutamate 5-semialdehyde + NAD(+) + H2O = N-succinyl-L-glutamate + NADH + 2 H(+). The protein operates within amino-acid degradation; L-arginine degradation via AST pathway; L-glutamate and succinate from L-arginine: step 4/5. Its function is as follows. Catalyzes the NAD-dependent reduction of succinylglutamate semialdehyde into succinylglutamate. The chain is N-succinylglutamate 5-semialdehyde dehydrogenase from Shigella boydii serotype 18 (strain CDC 3083-94 / BS512).